A 229-amino-acid polypeptide reads, in one-letter code: Peptidase E (229 aa).

Active-site charge relay system residues include Ser120, Asp135, and His157.

Belongs to the peptidase S51 family.

It is found in the cytoplasm. It carries out the reaction Dipeptidase E catalyzes the hydrolysis of dipeptides Asp-|-Xaa. It does not act on peptides with N-terminal Glu, Asn or Gln, nor does it cleave isoaspartyl peptides.. Hydrolyzes dipeptides containing N-terminal aspartate residues. May play a role in allowing the cell to use peptide aspartate to spare carbon otherwise required for the synthesis of the aspartate family of amino acids. The polypeptide is Peptidase E (Salmonella newport (strain SL254)).